The following is a 204-amino-acid chain: Uracil-DNA glycosylase (204 aa).

The active-site Proton acceptor is D47.

Belongs to the uracil-DNA glycosylase (UDG) superfamily. UNG family.

The protein resides in the host nucleus. It catalyses the reaction Hydrolyzes single-stranded DNA or mismatched double-stranded DNA and polynucleotides, releasing free uracil.. Its function is as follows. Excises uracil residues from the DNA which can arise as a result of misincorporation of dUMP residues by DNA polymerase or deamination of cytosines. Therefore may reduce deleterious uracil incorporation into the viral genome, particularly in terminally differentiated cells which lack DNA repair enzymes. The protein is Uracil-DNA glycosylase (UL2) of Bos taurus (Bovine).